A 321-amino-acid polypeptide reads, in one-letter code: Annexin A5 (321 aa).

Annexin repeat units follow at residues 15-86 (FDAR…SLMR), 87-158 (PARI…VLLQ), 170-242 (ALVE…AVVK), and 246-317 (SVPA…LLCG).

The protein belongs to the annexin family.

In terms of biological role, collagen-binding protein. The chain is Annexin A5 (ANXA5) from Gallus gallus (Chicken).